A 677-amino-acid polypeptide reads, in one-letter code: DNA ligase (677 aa).

NAD(+) is bound by residues 32 to 36, 81 to 82, and E112; these read DAQYD and SL. Residue K114 is the N6-AMP-lysine intermediate of the active site. Positions 135, 171, 288, and 312 each coordinate NAD(+). Zn(2+)-binding residues include C416, C419, C434, and C439. The 80-residue stretch at 598-677 folds into the BRCT domain; it reads NKNMPFSGME…REFINMLEQS (80 aa).

The protein belongs to the NAD-dependent DNA ligase family. LigA subfamily. Mg(2+) is required as a cofactor. The cofactor is Mn(2+).

The enzyme catalyses NAD(+) + (deoxyribonucleotide)n-3'-hydroxyl + 5'-phospho-(deoxyribonucleotide)m = (deoxyribonucleotide)n+m + AMP + beta-nicotinamide D-nucleotide.. DNA ligase that catalyzes the formation of phosphodiester linkages between 5'-phosphoryl and 3'-hydroxyl groups in double-stranded DNA using NAD as a coenzyme and as the energy source for the reaction. It is essential for DNA replication and repair of damaged DNA. This chain is DNA ligase, found in Dehalococcoides mccartyi (strain CBDB1).